Here is a 456-residue protein sequence, read N- to C-terminus: Methylenetetrahydrofolate--tRNA-(uracil-5-)-methyltransferase TrmFO (456 aa).

An FAD-binding site is contributed by 11 to 16 (GAGLAG).

This sequence belongs to the MnmG family. TrmFO subfamily. FAD is required as a cofactor.

The protein localises to the cytoplasm. The enzyme catalyses uridine(54) in tRNA + (6R)-5,10-methylene-5,6,7,8-tetrahydrofolate + NADH + H(+) = 5-methyluridine(54) in tRNA + (6S)-5,6,7,8-tetrahydrofolate + NAD(+). It catalyses the reaction uridine(54) in tRNA + (6R)-5,10-methylene-5,6,7,8-tetrahydrofolate + NADPH + H(+) = 5-methyluridine(54) in tRNA + (6S)-5,6,7,8-tetrahydrofolate + NADP(+). In terms of biological role, catalyzes the folate-dependent formation of 5-methyl-uridine at position 54 (M-5-U54) in all tRNAs. This is Methylenetetrahydrofolate--tRNA-(uracil-5-)-methyltransferase TrmFO from Synechococcus sp. (strain CC9605).